The sequence spans 422 residues: MKLSDIYLELKKGYADSLLYSDLSLLVNIMEYEKDIDVMSIQSLVAGYEKSDTPTITCGIIVYNESKRIKKCLNSVKDDFNEIIVLDSYSTDDTVDIIKCDFPDVEIKYEKWKNDFSYARNKIIEYATSEWIYFIDADNLYSKENKGKIAKVARVLEFFSIDCVVSPYIEEYTGHLYSDTRRMFRLNGKVKFHGKVHEEPMNYNHSLPFNFIVNLKVYHNGYNPSENNIKSKTRRNINLTEEMLRLEPENPKWLFFFGRELHLLDKDEEAIDYLKKSINNYKKFNDQRHFIDALVLLCTLLLQRNNYVDLTLYLDILETEYPRCVDVDYFRSAILLVDMQNKLTSLSNMIDEALTDERYSAINTTKDHFKRILISLNIQLENWERVKEISGEIKNDNMKKEIKQYLANSLHNIEHVLKGIEV.

The protein belongs to the glycosyltransferase 2 family.

Its function is as follows. Transfers a hexose moiety onto 'Cys-41' of bacteriocin sublancin-168 (SunA). Accepts UDP-glucose (UDP-Glc), UDP-N-acetylglucosamine (UDP-GlcNAc), UDP-galactose (UDP-Gal), UDP-xylose (UDP-Xyl) and GDP-mannose as substrate. This is SPbeta prophage-derived glycosyltransferase SunS (sunS) from Bacillus subtilis (strain 168).